A 156-amino-acid polypeptide reads, in one-letter code: Small ribosomal subunit protein uS7 (156 aa).

This sequence belongs to the universal ribosomal protein uS7 family. Part of the 30S ribosomal subunit. Contacts proteins S9 and S11.

Its function is as follows. One of the primary rRNA binding proteins, it binds directly to 16S rRNA where it nucleates assembly of the head domain of the 30S subunit. Is located at the subunit interface close to the decoding center, probably blocks exit of the E-site tRNA. The polypeptide is Small ribosomal subunit protein uS7 (Clostridium botulinum (strain 657 / Type Ba4)).